A 74-amino-acid chain; its full sequence is Antimicrobial peptide HsAp1 (74 aa).

Positions 1–21 (MSRRVILTLVLVTILVKTMAG) are cleaved as a signal peptide. Residues 22–33 (MESKKVETTDEI) constitute a propeptide that is removed on maturation. Pro-65 is subject to Proline amide. The propeptide occupies 69-74 (AISEQT).

It belongs to the non-disulfide-bridged peptide (NDBP) superfamily. Medium-length antimicrobial peptide (group 3) family. Expressed by the venom gland.

The protein resides in the secreted. Its subcellular location is the target cell membrane. In terms of biological role, possesses antimicrobial activity against both Gram-negative (MIC=23.8-51.2 uM) and Gram-positive (MIC=11.8-46.5 uM) bacteria, as well as against the fungus C.tropicalis (MIC=48.6 uM). Also possesses a relatively high hemolytic activity. May act by disrupting the integrity of the bacterial cell membrane. This chain is Antimicrobial peptide HsAp1, found in Heterometrus spinifer (Asia giant forest scorpion).